The primary structure comprises 73 residues: Biotin/lipoyl attachment protein (73 aa).

The Biotinyl-binding domain occupies 2-69 (TVSIQMAGNL…NEGDVLLELS (68 aa)). At Lys35 the chain carries N6-biotinyllysine; alternate. Position 35 is an N6-lipoyllysine; alternate (Lys35).

Post-translationally, can be both biotinylated and lipoylated on Lys-35 upon overexpression in E.coli depending on the growth medium; the nature of the modification in situ in B.subtilis is unknown.

The chain is Biotin/lipoyl attachment protein (yngHB) from Bacillus subtilis (strain 168).